Consider the following 329-residue polypeptide: Ribosomal RNA small subunit methyltransferase H (329 aa).

S-adenosyl-L-methionine-binding positions include 34–36, D52, F79, D100, and Q107; that span reads GGY. The disordered stretch occupies residues 285–329; the sequence is GEDEVAHNPRARSAKLRAAERTSAPAHKDDQSSSWPRLSDVMRGG.

The protein belongs to the methyltransferase superfamily. RsmH family.

It localises to the cytoplasm. The catalysed reaction is cytidine(1402) in 16S rRNA + S-adenosyl-L-methionine = N(4)-methylcytidine(1402) in 16S rRNA + S-adenosyl-L-homocysteine + H(+). Its function is as follows. Specifically methylates the N4 position of cytidine in position 1402 (C1402) of 16S rRNA. This chain is Ribosomal RNA small subunit methyltransferase H, found in Bradyrhizobium diazoefficiens (strain JCM 10833 / BCRC 13528 / IAM 13628 / NBRC 14792 / USDA 110).